The chain runs to 342 residues: L-lysine 2,3-aminomutase (342 aa).

The Radical SAM core domain occupies 106 to 329 (HKYQNRALLL…PRLAREIGGE (224 aa)). Residues C120, C124, and C127 each coordinate [4Fe-4S] cluster. K332 is subject to N6-(pyridoxal phosphate)lysine.

The protein belongs to the radical SAM superfamily. KamA family. [4Fe-4S] cluster serves as cofactor. Requires pyridoxal 5'-phosphate as cofactor.

The catalysed reaction is L-lysine = D-beta-lysine. Functionally, with EpmA is involved in the beta-lysylation step of the post-translational modification of translation elongation factor P (EF-P) on 'Lys-34'. EpmB appears to act before EpmA. Displays lysine 2,3-aminomutase activity, producing (R)-beta-lysine from (S)-alpha-lysine (L-lysine). In Salmonella typhimurium (strain LT2 / SGSC1412 / ATCC 700720), this protein is L-lysine 2,3-aminomutase (epmB).